We begin with the raw amino-acid sequence, 247 residues long: Elongation factor Ts (247 aa).

The interval threonine 82–valine 85 is involved in Mg(2+) ion dislocation from EF-Tu.

Belongs to the EF-Ts family.

It localises to the cytoplasm. Functionally, associates with the EF-Tu.GDP complex and induces the exchange of GDP to GTP. It remains bound to the aminoacyl-tRNA.EF-Tu.GTP complex up to the GTP hydrolysis stage on the ribosome. The sequence is that of Elongation factor Ts (tsf) from Arthrospira platensis (Spirulina platensis).